The chain runs to 479 residues: Ribulose bisphosphate carboxylase large chain (479 aa).

The propeptide occupies 1-2 (MS). Pro3 carries the post-translational modification N-acetylproline. Substrate-binding residues include Asn123 and Thr173. Lys175 serves as the catalytic Proton acceptor. Residue Lys177 participates in substrate binding. Positions 201, 203, and 204 each coordinate Mg(2+). The residue at position 201 (Lys201) is an N6-carboxylysine. His294 functions as the Proton acceptor in the catalytic mechanism. Substrate contacts are provided by Arg295, His327, and Ser379.

Belongs to the RuBisCO large chain family. Type I subfamily. In terms of assembly, heterohexadecamer of 8 large chains and 8 small chains; disulfide-linked. The disulfide link is formed within the large subunit homodimers. Requires Mg(2+) as cofactor. Post-translationally, the disulfide bond which can form in the large chain dimeric partners within the hexadecamer appears to be associated with oxidative stress and protein turnover.

It localises to the plastid. It is found in the chloroplast. It catalyses the reaction 2 (2R)-3-phosphoglycerate + 2 H(+) = D-ribulose 1,5-bisphosphate + CO2 + H2O. The catalysed reaction is D-ribulose 1,5-bisphosphate + O2 = 2-phosphoglycolate + (2R)-3-phosphoglycerate + 2 H(+). RuBisCO catalyzes two reactions: the carboxylation of D-ribulose 1,5-bisphosphate, the primary event in carbon dioxide fixation, as well as the oxidative fragmentation of the pentose substrate in the photorespiration process. Both reactions occur simultaneously and in competition at the same active site. The polypeptide is Ribulose bisphosphate carboxylase large chain (Hordeum vulgare (Barley)).